We begin with the raw amino-acid sequence, 295 residues long: uncharacterized protein (295 aa).

The span at 57–67 (RKLLVKQKRKS) shows a compositional bias: basic residues. Positions 57–94 (RKLLVKQKRKSNKEFQSNIIKKRKDEERKGTLKTEQAN) are disordered. Positions 79–88 (RKDEERKGTL) are enriched in basic and acidic residues. 2 coiled-coil regions span residues 87–116 (TLKT…YDQY) and 259–286 (DVLT…LGER).

Its subcellular location is the nucleus. This is an uncharacterized protein from Schizosaccharomyces pombe (strain 972 / ATCC 24843) (Fission yeast).